Here is a 293-residue protein sequence, read N- to C-terminus: Probable porphobilinogen deaminase (293 aa).

S-(dipyrrolylmethanemethyl)cysteine is present on Cys-233.

This sequence belongs to the HMBS family. Dipyrromethane is required as a cofactor.

It carries out the reaction 4 porphobilinogen + H2O = hydroxymethylbilane + 4 NH4(+). It participates in porphyrin-containing compound metabolism; protoporphyrin-IX biosynthesis; coproporphyrinogen-III from 5-aminolevulinate: step 2/4. Tetrapolymerization of the monopyrrole PBG into the hydroxymethylbilane pre-uroporphyrinogen in several discrete steps. The polypeptide is Probable porphobilinogen deaminase (Saccharolobus islandicus (strain Y.N.15.51 / Yellowstone #2) (Sulfolobus islandicus)).